The primary structure comprises 173 residues: Cytochrome c-type biogenesis protein CcmE (173 aa).

Over 1 to 8 (MMSRKKRR) the chain is Cytoplasmic. A helical; Signal-anchor for type II membrane protein transmembrane segment spans residues 9–29 (LWIVIACGIGLSTAVALMLFA). Over 30–173 (FRSSLSFFMS…PAQIEASNNG (144 aa)) the chain is Periplasmic. Residues H127 and Y131 each coordinate heme. The tract at residues 145–173 (KWNPKFGPPPNAGAWDDKSPAQIEASNNG) is disordered.

Belongs to the CcmE/CycJ family.

Its subcellular location is the cell inner membrane. Its function is as follows. Heme chaperone required for the biogenesis of c-type cytochromes. Transiently binds heme delivered by CcmC and transfers the heme to apo-cytochromes in a process facilitated by CcmF and CcmH. The polypeptide is Cytochrome c-type biogenesis protein CcmE (Acidiphilium cryptum (strain JF-5)).